Consider the following 673-residue polypeptide: Armadillo repeat-containing protein 8 (673 aa).

Position 2 is an N-acetylalanine (alanine 2). ARM repeat units lie at residues 51–92 (NKQK…SLAM), 95–134 (ENNVKSLLDCHIIPALLQGLLSPDLKFIEACLRCPRTIFT), 138–176 (TPEELLYTDATVIPHLMALLSRSRYTQEYICQIFSHCCK), 178–217 (PDHQTILFNHGAVQNIAHLLTSLSYKVRMQALKCFSVLAF), 224–265 (MTLV…YMCR), 269–309 (IRTD…YLIE), 313–352 (ELQRIASITDHLIAMLADYFKYPSSVSAITDIKRLDHDLK), 374–413 (DIRKKIIETENMMDRIVTGLSESSVKVRLAAVRCLHSLSR), 416–455 (QQLRTSFQDHAVWKPLMKVLQNAPDEILVVASSMLCNLLL), 458–497 (SPSKEPILESGAVELLCGLTQSENPALRVNGIWALMNTAF), 501–540 (QKIKADILRSLSTEQLFRLLSDSDLNVLMKTLGLLRNLLS), 543–585 (PHID…NIAD), 588–627 (TAKDLIMTNDDILQKIKYYMGHSHVKLQLAAMFCISNLIW), and 634–673 (QERQDKLRDMGIVDILHKLSQSPDSNLCDKAKMALQQYLA). Residue serine 337 is modified to Phosphoserine. Serine 512 is subject to Phosphoserine.

In terms of assembly, identified in the CTLH complex that contains GID4, RANBP9 and/or RANBP10, MKLN1, MAEA, RMND5A (or alternatively its paralog RMND5B), GID8, ARMC8, WDR26 and YPEL5. Within this complex, MAEA, RMND5A (or alternatively its paralog RMND5B), GID8, WDR26, and RANBP9 and/or RANBP10 form the catalytic core, while GID4, MKLN1, ARMC8 and YPEL5 have ancillary roles.

The protein localises to the nucleus. It is found in the cytoplasm. Functionally, component of the CTLH E3 ubiquitin-protein ligase complex that selectively accepts ubiquitin from UBE2H and mediates ubiquitination and subsequent proteasomal degradation of the transcription factor HBP1. This is Armadillo repeat-containing protein 8 (ARMC8) from Pongo abelii (Sumatran orangutan).